A 664-amino-acid chain; its full sequence is Macoilin (664 aa).

4 helical membrane-spanning segments follow: residues 28–48 (TFLYLKFLVVWALVLLADFVL), 75–95 (AFSVFFVCVAFTSNIICLLFI), 120–140 (VCLPTVSLWILFVYIEAAIRF), and 154–174 (FAAHCIGYPVVTLGFGFKSYV). Basic and acidic residues predominate over residues 253 to 265 (REKGKEKDKDAKK). Positions 253–274 (REKGKEKDKDAKKHNLGINNNN) are disordered. Residue Ser-305 is modified to Phosphoserine. Polar residues predominate over residues 320–348 (KNYKNASGVVNSSPRSHSATNGSIPSSSS). The tract at residues 320-367 (KNYKNASGVVNSSPRSHSATNGSIPSSSSKNEKKQKCTSKSPSAHKDL) is disordered. Asn-324 carries an N-linked (GlcNAc...) asparagine glycan. A Phosphoserine modification is found at Ser-332. Asn-340 and Asn-452 each carry an N-linked (GlcNAc...) asparagine glycan. Phosphoserine occurs at positions 631 and 634. Residues 631–664 (SPLSPVSPHYSSKFVETSPSGLDPNASVYQPLKK) form a disordered region. The N-linked (GlcNAc...) asparagine glycan is linked to Asn-655.

It belongs to the macoilin family.

Its subcellular location is the rough endoplasmic reticulum membrane. The protein resides in the nucleus membrane. In terms of biological role, plays a role in the regulation of neuronal activity. The polypeptide is Macoilin (MACO1) (Bos taurus (Bovine)).